Reading from the N-terminus, the 897-residue chain is MLRQVIHRGLKASFYWLGLFVSRHPVFFLTVPAVLTIIFGSTVLSRFKPETDLEILVAPTHSLAKIERSLANSLFPIDQSKHKLYSDLHTPGRYGRLILLARSGGNILELAEQVLQVHKKVLDMRVNYKGFNYTFAHLCVLRHRDKRCLLDDIITIFEDIRLAVLSNSTFSKVPVSYPNTTLKDGRVSFIGHQLGGVALPANNRDQQVKFARAIQITYYLRNLGPVVQDIIAEKWETEFCKLVHQLATDSQELHIQSLTSFSLWRDFHKTGVLAKSEVLVSLVLVLLAATISSSMRDCLRGKPFLGLLGVLTICIANVTAAGIFFISDGKFNSTLLGIPFFAMGHGTKGVFELLAGWRRTRESLPFKERVADAFADVMVCYTMTSSLYIITFGMGASPFTNIESVKVFCQSMCVAVLVNYFYVFSFYGSCLVFAGQLEQNRYHSVFCCKIPSVEYLDRQPTWFKTMMSDGHDLSTHHDSVPYQNHFIQHFLREHYTEWITNTYVKPFVVILYLIYASFSFMGCLQISDGSNIINLLASNSPSVSFALTQQKYFSNYSPVIGFYIYEPIEYWNSTVQEHLKTLGQGFNKISWIDNYFHFLRVVNISASTKSDFISILKTSFLRSPEYQHFVDDIIFSKNGAEYDIIASKMYLVARTTEKTREEVVELLERLRPLSLINSIKFIVFNPTFVFMDRYSSSIISPILTSGFSVLTILILTFFLVINPLGNFWLILTVTSVELGVLGLMTLWNVDMDSISILCLIYTLNFAMDHCAPHLYTFVLATEHTRTQCIKISLEEHGAAILQNTSCFVIGIMPLLFVPSNLTYTLFKCSLLTAGCTVLHCFVILPVFLTFFPPSKKRHKKKKRAKRKEREREREREREREEIECIEVRENPDHVTNV.

The chain crosses the membrane as a helical span at residues 25–45; that stretch reads PVFFLTVPAVLTIIFGSTVLS. 3 N-linked (GlcNAc...) asparagine glycosylation sites follow: asparagine 132, asparagine 167, and asparagine 179. Transmembrane regions (helical) follow at residues 271–291 and 306–326; these read GVLAKSEVLVSLVLVLLAATI and GLLGVLTICIANVTAAGIFFI. The region spanning 273-433 is the SSD domain; that stretch reads LAKSEVLVSL…FSFYGSCLVF (161 aa). An N-linked (GlcNAc...) asparagine glycan is attached at asparagine 332. Helical transmembrane passes span 335–355, 377–397, 414–434, and 506–526; these read LLGIPFFAMGHGTKGVFELLA, VMVCYTMTSSLYIITFGMGAS, VAVLVNYFYVFSFYGSCLVFA, and PFVVILYLIYASFSFMGCLQI. Asparagine 572 and asparagine 603 each carry an N-linked (GlcNAc...) asparagine glycan. The next 3 membrane-spanning stretches (helical) occupy residues 701-721, 727-747, and 754-774; these read PILTSGFSVLTILILTFFLVI, FWLILTVTSVELGVLGLMTLW, and ISILCLIYTLNFAMDHCAPHL. N-linked (GlcNAc...) asparagine glycosylation occurs at asparagine 803. The next 2 helical transmembrane spans lie at 806 to 826 and 831 to 851; these read CFVIGIMPLLFVPSNLTYTLF and LTAGCTVLHCFVILPVFLTFF. Positions 856–866 are enriched in basic residues; it reads KRHKKKKRAKR. Positions 856–881 are disordered; sequence KRHKKKKRAKRKEREREREREREREE. Basic and acidic residues predominate over residues 867–881; that stretch reads KEREREREREREREE.

It belongs to the patched family.

Its subcellular location is the cell membrane. The protein resides in the cell projection. It is found in the dendritic spine. In terms of biological role, can bind cholesterol in vitro. The protein is Patched domain-containing protein 1 (ptchd1) of Danio rerio (Zebrafish).